We begin with the raw amino-acid sequence, 605 residues long: Elongation factor 4 (605 aa).

Residues 9–192 enclose the tr-type G domain; sequence SRIRNFCIIA…AIIARVPSPA (184 aa). Residues 21–26 and 139–142 each bind GTP; these read DHGKST and NKID.

This sequence belongs to the TRAFAC class translation factor GTPase superfamily. Classic translation factor GTPase family. LepA subfamily.

Its subcellular location is the cell inner membrane. It carries out the reaction GTP + H2O = GDP + phosphate + H(+). Functionally, required for accurate and efficient protein synthesis under certain stress conditions. May act as a fidelity factor of the translation reaction, by catalyzing a one-codon backward translocation of tRNAs on improperly translocated ribosomes. Back-translocation proceeds from a post-translocation (POST) complex to a pre-translocation (PRE) complex, thus giving elongation factor G a second chance to translocate the tRNAs correctly. Binds to ribosomes in a GTP-dependent manner. The protein is Elongation factor 4 of Chlorobium phaeovibrioides (strain DSM 265 / 1930) (Prosthecochloris vibrioformis (strain DSM 265)).